The primary structure comprises 115 residues: NAD(P)H-quinone oxidoreductase subunit M (115 aa).

It belongs to the complex I NdhM subunit family. In terms of assembly, NDH-1 can be composed of about 15 different subunits; different subcomplexes with different compositions have been identified which probably have different functions.

It is found in the cellular thylakoid membrane. The enzyme catalyses a plastoquinone + NADH + (n+1) H(+)(in) = a plastoquinol + NAD(+) + n H(+)(out). It catalyses the reaction a plastoquinone + NADPH + (n+1) H(+)(in) = a plastoquinol + NADP(+) + n H(+)(out). Its function is as follows. NDH-1 shuttles electrons from an unknown electron donor, via FMN and iron-sulfur (Fe-S) centers, to quinones in the respiratory and/or the photosynthetic chain. The immediate electron acceptor for the enzyme in this species is believed to be plastoquinone. Couples the redox reaction to proton translocation, and thus conserves the redox energy in a proton gradient. Cyanobacterial NDH-1 also plays a role in inorganic carbon-concentration. The polypeptide is NAD(P)H-quinone oxidoreductase subunit M (Prochlorococcus marinus (strain MIT 9301)).